Consider the following 194-residue polypeptide: Imidazoleglycerol-phosphate dehydratase (194 aa).

The protein belongs to the imidazoleglycerol-phosphate dehydratase family.

It is found in the cytoplasm. It carries out the reaction D-erythro-1-(imidazol-4-yl)glycerol 3-phosphate = 3-(imidazol-4-yl)-2-oxopropyl phosphate + H2O. Its pathway is amino-acid biosynthesis; L-histidine biosynthesis; L-histidine from 5-phospho-alpha-D-ribose 1-diphosphate: step 6/9. This is Imidazoleglycerol-phosphate dehydratase from Bacillus cereus (strain AH187).